Reading from the N-terminus, the 123-residue chain is Small ribosomal subunit protein uS12 (123 aa).

The tract at residues 1 to 32 is disordered; the sequence is MPTIQQLVRKGRKTKVSKNKTPALKGSPQRRG. Residues 9–18 show a composition bias toward basic residues; that stretch reads RKGRKTKVSK. The residue at position 89 (D89) is a 3-methylthioaspartic acid.

Belongs to the universal ribosomal protein uS12 family. As to quaternary structure, part of the 30S ribosomal subunit. Contacts proteins S8 and S17. May interact with IF1 in the 30S initiation complex.

In terms of biological role, with S4 and S5 plays an important role in translational accuracy. Its function is as follows. Interacts with and stabilizes bases of the 16S rRNA that are involved in tRNA selection in the A site and with the mRNA backbone. Located at the interface of the 30S and 50S subunits, it traverses the body of the 30S subunit contacting proteins on the other side and probably holding the rRNA structure together. The combined cluster of proteins S8, S12 and S17 appears to hold together the shoulder and platform of the 30S subunit. In Thermobifida fusca (strain YX), this protein is Small ribosomal subunit protein uS12.